Consider the following 376-residue polypeptide: MDRNKSFDPNLFKRVDINLLKRNDQLIGKPTTNSIEIIKRLFQNKWAILFFLLIVVIVLLAIIVPLTSPFSAVTPVSTNALAQNLPPRYLWHKPGDILVHKITARSIAEISQASGVLVGTLPSANSNPLATNVQYDIAPFQLQELRNYFPLLGTNGLGIDIWTLLWASVAKSLWIAVVVAIIAMVFGTIYGAVAGSFVGHMADNIMSRIIEIIDIVPSILWIIVLGATFRFGGVKQFDDSVVIFTLIFVFWTWPATTTRIYILKNKDTEYIQAAKTLGAHQIRIIFVHMLPVVFGRLAVVFVSLIPAVIGYEASLVFLGLKPATDIGLGALLNQVTSSDNVALILSSIVSFAVLTVAARTFANALNDAIDPRVVKR.

7 helical membrane-spanning segments follow: residues 46–66 (WAILFFLLIVVIVLLAIIVPL), 149–169 (FPLLGTNGLGIDIWTLLWASV), 173–193 (LWIAVVVAIIAMVFGTIYGAV), 209–229 (IIEIIDIVPSILWIIVLGATF), 242–262 (VIFTLIFVFWTWPATTTRIYI), 297–317 (LAVVFVSLIPAVIGYEASLVF), and 341–361 (VALILSSIVSFAVLTVAARTF). Positions 169–366 (VAKSLWIAVV…AARTFANALN (198 aa)) constitute an ABC transmembrane type-1 domain.

This sequence belongs to the binding-protein-dependent transport system permease family. OppBC subfamily. The complex is composed of two ATP-binding proteins (OppD and OppF), two transmembrane proteins (OppB and OppC) and a solute-binding protein (OppA).

The protein localises to the cell membrane. Functionally, part of the ABC transporter complex OppABCDF involved in the uptake of oligopeptides. Probably responsible for the translocation of the substrate across the membrane. The sequence is that of Oligopeptide transport system permease protein OppC (oppC) from Mycoplasma genitalium (strain ATCC 33530 / DSM 19775 / NCTC 10195 / G37) (Mycoplasmoides genitalium).